The chain runs to 133 residues: Small ribosomal subunit protein uS8 (133 aa).

This sequence belongs to the universal ribosomal protein uS8 family. As to quaternary structure, part of the 30S ribosomal subunit. Contacts proteins S5 and S12.

One of the primary rRNA binding proteins, it binds directly to 16S rRNA central domain where it helps coordinate assembly of the platform of the 30S subunit. The protein is Small ribosomal subunit protein uS8 of Gloeothece citriformis (strain PCC 7424) (Cyanothece sp. (strain PCC 7424)).